Consider the following 46-residue polypeptide: Esculentin-1GRa (46 aa).

In terms of tissue distribution, expressed by the skin glands.

It is found in the secreted. Antimicrobial peptide active against the Gram-positive bacterium S.aureus (MIC=12.5 uM) and against the Gram-negative bacterium E.coli (MIC=6 uM). Has no antifungal activity against C.albicans. Shows hemolytic activity against human erythrocytes only at high concentrations (LC(50)=210 uM). The sequence is that of Esculentin-1GRa from Odorrana grahami (Yunnanfu frog).